Reading from the N-terminus, the 155-residue chain is Aspartate carbamoyltransferase regulatory chain (155 aa).

Positions 111, 116, 137, and 140 each coordinate Zn(2+).

Belongs to the PyrI family. In terms of assembly, contains catalytic and regulatory chains. Zn(2+) serves as cofactor.

Its function is as follows. Involved in allosteric regulation of aspartate carbamoyltransferase. The protein is Aspartate carbamoyltransferase regulatory chain of Haloarcula marismortui (strain ATCC 43049 / DSM 3752 / JCM 8966 / VKM B-1809) (Halobacterium marismortui).